Reading from the N-terminus, the 300-residue chain is NAD kinase (300 aa).

D78 (proton acceptor) is an active-site residue. NAD(+) is bound by residues 78-79 (DG), 152-153 (ND), H163, R180, D182, and 193-198 (TAYALS).

The protein belongs to the NAD kinase family. A divalent metal cation is required as a cofactor.

Its subcellular location is the cytoplasm. It carries out the reaction NAD(+) + ATP = ADP + NADP(+) + H(+). In terms of biological role, involved in the regulation of the intracellular balance of NAD and NADP, and is a key enzyme in the biosynthesis of NADP. Catalyzes specifically the phosphorylation on 2'-hydroxyl of the adenosine moiety of NAD to yield NADP. The polypeptide is NAD kinase (Alcanivorax borkumensis (strain ATCC 700651 / DSM 11573 / NCIMB 13689 / SK2)).